Reading from the N-terminus, the 285-residue chain is Nucleotide-binding protein Avin_12760 (285 aa).

An ATP-binding site is contributed by 8–15 (GRSGSGKS). Position 60-63 (60-63 (DARN)) interacts with GTP.

This sequence belongs to the RapZ-like family.

In terms of biological role, displays ATPase and GTPase activities. This chain is Nucleotide-binding protein Avin_12760, found in Azotobacter vinelandii (strain DJ / ATCC BAA-1303).